The following is a 322-amino-acid chain: Olfactory receptor 5P2 (322 aa).

Topologically, residues 1-28 are extracellular; it reads MNSLKDGNHTALTGFILLGLTDDPILRV. A glycan (N-linked (GlcNAc...) asparagine) is linked at Asn8. A helical transmembrane segment spans residues 29-42; sequence ILFMIILSGNLSII. The Cytoplasmic portion of the chain corresponds to 43–50; that stretch reads ILIRISSQ. The helical transmembrane segment at 51–71 threads the bilayer; it reads LHHPMYFFLSHLAFADMAYSS. Topologically, residues 72 to 95 are extracellular; that stretch reads SVTPNMLVNFLVERNTVSYLGCAI. Cys93 and Cys185 are disulfide-bonded. A helical transmembrane segment spans residues 96–116; it reads QLGSAAFFATVECVLLAAMAY. The Cytoplasmic portion of the chain corresponds to 117-135; the sequence is DRFVAICSPLLYSTKMSTQ. A helical membrane pass occupies residues 136 to 156; sequence VSVQLLLVVYIAGFLIAVSYT. Over 157–192 the chain is Extracellular; it reads TSFYFLLFCGPNQVNHFFCDFAPLLELSCSDISVST. Residues 193-213 form a helical membrane-spanning segment; sequence VVLSFSSGSIIVVTVCVIAVC. Topologically, residues 214 to 233 are cytoplasmic; it reads YIYILITILKMRSTEGHHKA. The helical transmembrane segment at 234–254 threads the bilayer; the sequence is FSTCTSHLTVVTLFYGTITFI. The Extracellular segment spans residues 255 to 267; that stretch reads YVMPNFSYSTDQN. Residue Asn259 is glycosylated (N-linked (GlcNAc...) asparagine). Residues 268-288 form a helical membrane-spanning segment; the sequence is KVVSVLYTVVIPMLNPLIYSL. Over 289–322 the chain is Cytoplasmic; sequence RNKEIKGALKRELVRKILSHDACYFSRTSNNDIT.

Belongs to the G-protein coupled receptor 1 family. As to expression, expressed in the tongue.

It localises to the cell membrane. In terms of biological role, odorant receptor (Potential). May be involved in taste perception. In Homo sapiens (Human), this protein is Olfactory receptor 5P2 (OR5P2).